We begin with the raw amino-acid sequence, 510 residues long: Thermostable carboxypeptidase 1 (510 aa).

Residues 3-506 (PEAAYQNLLE…FLAYLEKKYA (504 aa)) enclose the Peptidase M32 domain. Positions 245-247 (HPF) match the HPF motif. The DXRXT signature appears at 255 to 259 (DVRIT). His-276 is a Zn(2+) binding site. Positions 276–280 (HEMGH) match the HEXXH motif. The active-site Proton donor/acceptor is Glu-277. His-280 and Glu-306 together coordinate Zn(2+). Residues 305 to 308 (HESQ) carry the HES/GQ motif. The I/NRXXA/SD signature appears at 357–362 (IRVEAD). Residues 412–419 (GVMQDVHW) carry the GXXQDXHW motif.

It belongs to the peptidase M32 family. Homodimer. It depends on Zn(2+) as a cofactor.

It carries out the reaction Release of a C-terminal amino acid with broad specificity, except for -Pro.. In terms of biological role, broad specificity carboxypetidase that releases amino acids sequentially from the C-terminus, including neutral, aromatic, polar and basic residues, but not Pro. Has lower activity with substrates ending with Gly or Glu. The chain is Thermostable carboxypeptidase 1 from Thermus thermophilus (strain ATCC 27634 / DSM 579 / HB8).